Reading from the N-terminus, the 97-residue chain is DNA replication protein 1 (97 aa).

Residues 49-78 adopt a coiled-coil conformation; that stretch reads IELEKKMTKLEHENKLMKNALYELSRMENN.

Belongs to the phi29likevirus DNA replication protein 1 family. In terms of assembly, homomultimer. Self-associates into large complexes forming long filamentous structures. Interacts (via N-terminus) with the primer terminal protein.

The protein resides in the host membrane. Functionally, protein that assembles into highly ordered structures and provides a specific site for viral DNA replication. Probably anchors the viral DNA replisome to the host membrane. The polypeptide is DNA replication protein 1 (1C) (Bacillus subtilis (Bacteriophage PZA)).